The sequence spans 206 residues: Thiamine-phosphate synthase (206 aa).

Residues 38-42 (QLREK) and Asn-70 contribute to the 4-amino-2-methyl-5-(diphosphooxymethyl)pyrimidine site. Asp-71 and Asp-90 together coordinate Mg(2+). Thr-109 contributes to the 4-amino-2-methyl-5-(diphosphooxymethyl)pyrimidine binding site. 135–137 (TST) serves as a coordination point for 2-[(2R,5Z)-2-carboxy-4-methylthiazol-5(2H)-ylidene]ethyl phosphate. Lys-138 lines the 4-amino-2-methyl-5-(diphosphooxymethyl)pyrimidine pocket. 2-[(2R,5Z)-2-carboxy-4-methylthiazol-5(2H)-ylidene]ethyl phosphate contacts are provided by residues Gly-165 and 185–186 (VS).

This sequence belongs to the thiamine-phosphate synthase family. Mg(2+) is required as a cofactor.

The enzyme catalyses 2-[(2R,5Z)-2-carboxy-4-methylthiazol-5(2H)-ylidene]ethyl phosphate + 4-amino-2-methyl-5-(diphosphooxymethyl)pyrimidine + 2 H(+) = thiamine phosphate + CO2 + diphosphate. The catalysed reaction is 2-(2-carboxy-4-methylthiazol-5-yl)ethyl phosphate + 4-amino-2-methyl-5-(diphosphooxymethyl)pyrimidine + 2 H(+) = thiamine phosphate + CO2 + diphosphate. It carries out the reaction 4-methyl-5-(2-phosphooxyethyl)-thiazole + 4-amino-2-methyl-5-(diphosphooxymethyl)pyrimidine + H(+) = thiamine phosphate + diphosphate. The protein operates within cofactor biosynthesis; thiamine diphosphate biosynthesis; thiamine phosphate from 4-amino-2-methyl-5-diphosphomethylpyrimidine and 4-methyl-5-(2-phosphoethyl)-thiazole: step 1/1. Its function is as follows. Condenses 4-methyl-5-(beta-hydroxyethyl)thiazole monophosphate (THZ-P) and 2-methyl-4-amino-5-hydroxymethyl pyrimidine pyrophosphate (HMP-PP) to form thiamine monophosphate (TMP). The chain is Thiamine-phosphate synthase from Fusobacterium nucleatum subsp. nucleatum (strain ATCC 25586 / DSM 15643 / BCRC 10681 / CIP 101130 / JCM 8532 / KCTC 2640 / LMG 13131 / VPI 4355).